The sequence spans 687 residues: DNA ligase (687 aa).

NAD(+) is bound by residues 34–38 (DAEYD), 83–84 (SL), and E117. The N6-AMP-lysine intermediate role is filled by K119. 4 residues coordinate NAD(+): R140, E182, K298, and K322. Zn(2+) is bound by residues C416, C419, C434, and C439. One can recognise a BRCT domain in the interval 609-687 (EARGPFAGKT…EEEFVRLLKE (79 aa)).

Belongs to the NAD-dependent DNA ligase family. LigA subfamily. Requires Mg(2+) as cofactor. Mn(2+) is required as a cofactor.

It catalyses the reaction NAD(+) + (deoxyribonucleotide)n-3'-hydroxyl + 5'-phospho-(deoxyribonucleotide)m = (deoxyribonucleotide)n+m + AMP + beta-nicotinamide D-nucleotide.. DNA ligase that catalyzes the formation of phosphodiester linkages between 5'-phosphoryl and 3'-hydroxyl groups in double-stranded DNA using NAD as a coenzyme and as the energy source for the reaction. It is essential for DNA replication and repair of damaged DNA. The polypeptide is DNA ligase (Anaeromyxobacter dehalogenans (strain 2CP-1 / ATCC BAA-258)).